Here is a 60-residue protein sequence, read N- to C-terminus: DNA-directed RNA polymerase subunit Rpo6 (60 aa).

The protein belongs to the archaeal Rpo6/eukaryotic RPB6 RNA polymerase subunit family. As to quaternary structure, part of the RNA polymerase complex.

Its subcellular location is the cytoplasm. The catalysed reaction is RNA(n) + a ribonucleoside 5'-triphosphate = RNA(n+1) + diphosphate. In terms of biological role, DNA-dependent RNA polymerase (RNAP) catalyzes the transcription of DNA into RNA using the four ribonucleoside triphosphates as substrates. The chain is DNA-directed RNA polymerase subunit Rpo6 from Halobacterium salinarum (strain ATCC 700922 / JCM 11081 / NRC-1) (Halobacterium halobium).